We begin with the raw amino-acid sequence, 592 residues long: Inactive glycosyltransferase 25 family member 3 (592 aa).

The first 19 residues, methionine 1–alanine 19, serve as a signal peptide directing secretion. N-linked (GlcNAc...) asparagine glycans are attached at residues asparagine 72, asparagine 150, asparagine 234, and asparagine 357. The interval alanine 540–leucine 592 is disordered. The short motif at arginine 589–leucine 592 is the Prevents secretion from ER element.

Belongs to the glycosyltransferase 25 family.

The protein localises to the endoplasmic reticulum lumen. Functionally, probable cell adhesion protein involved in leukocyte transmigration across the blood-brain barrier. Does not express any beta-galactosyltransferase activity in vitro. The chain is Inactive glycosyltransferase 25 family member 3 (Cercam) from Mus musculus (Mouse).